We begin with the raw amino-acid sequence, 291 residues long: MGKLRQIAFYGKGGIGKSTTSQNTLAALVEMGQKILIVGCDPKADSTRLILNTKLQDTVLHLAAEAGSVEDLELEDVVKIGYKGIKCTEAGGPEPGVGCAGRGVITAINFLEENGAYDDVDYVSYDVLGDVVCGGFAMPIRENKAQEIYIVMSGEMMALYAANNIAKGILKYANSGGVRLGGLICNERKTDRELELAEALAARLGCKMIHFVPRDNIVQHAELRRETVIQYAPESKQAQEYRELARKIHENSGKGVIPTPITMEELEEMLMDFGIMQSEEDRLAAIAAAEA.

Residue 11–18 (GKGGIGKS) coordinates ATP. Cys-99 provides a ligand contact to [4Fe-4S] cluster. ADP-ribosylarginine; by dinitrogenase reductase ADP-ribosyltransferase is present on Arg-102. Cys-133 is a binding site for [4Fe-4S] cluster.

The protein belongs to the NifH/BchL/ChlL family. Homodimer. It depends on [4Fe-4S] cluster as a cofactor. Post-translationally, the reversible ADP-ribosylation of Arg-102 inactivates the nitrogenase reductase and regulates nitrogenase activity.

The catalysed reaction is N2 + 8 reduced [2Fe-2S]-[ferredoxin] + 16 ATP + 16 H2O = H2 + 8 oxidized [2Fe-2S]-[ferredoxin] + 2 NH4(+) + 16 ADP + 16 phosphate + 6 H(+). In terms of biological role, the key enzymatic reactions in nitrogen fixation are catalyzed by the nitrogenase complex, which has 2 components: the iron protein and the molybdenum-iron protein. This is Nitrogenase iron protein from Cereibacter sphaeroides (strain ATCC 17023 / DSM 158 / JCM 6121 / CCUG 31486 / LMG 2827 / NBRC 12203 / NCIMB 8253 / ATH 2.4.1.) (Rhodobacter sphaeroides).